A 548-amino-acid chain; its full sequence is Chaperonin GroEL (548 aa).

ATP contacts are provided by residues 30–33, Lys-51, 87–91, Gly-415, 479–481, and Asp-495; these read TLGP, DGTTT, and NAA. A disordered region spans residues 526–548; the sequence is KEDKSSDLGSAPAGGMGGMGGMM. Residues 537–548 are compositionally biased toward gly residues; sequence PAGGMGGMGGMM.

This sequence belongs to the chaperonin (HSP60) family. In terms of assembly, forms a cylinder of 14 subunits composed of two heptameric rings stacked back-to-back. Interacts with the co-chaperonin GroES.

It is found in the cytoplasm. The enzyme catalyses ATP + H2O + a folded polypeptide = ADP + phosphate + an unfolded polypeptide.. Functionally, together with its co-chaperonin GroES, plays an essential role in assisting protein folding. The GroEL-GroES system forms a nano-cage that allows encapsulation of the non-native substrate proteins and provides a physical environment optimized to promote and accelerate protein folding. This Buchnera aphidicola subsp. Pterocomma populeum protein is Chaperonin GroEL.